The following is a 270-amino-acid chain: tRNA pseudouridine synthase A (270 aa).

The Nucleophile role is filled by aspartate 52. Tyrosine 110 serves as a coordination point for substrate.

The protein belongs to the tRNA pseudouridine synthase TruA family. In terms of assembly, homodimer.

The enzyme catalyses uridine(38/39/40) in tRNA = pseudouridine(38/39/40) in tRNA. In terms of biological role, formation of pseudouridine at positions 38, 39 and 40 in the anticodon stem and loop of transfer RNAs. The chain is tRNA pseudouridine synthase A from Roseiflexus castenholzii (strain DSM 13941 / HLO8).